Consider the following 532-residue polypeptide: 2-isopropylmalate synthase (532 aa).

A Pyruvate carboxyltransferase domain is found at 5–267 (VIIFDTTLRD…HTNINHQEIY (263 aa)). Asp-14, His-202, His-204, and Asn-238 together coordinate Mn(2+). A regulatory domain region spans residues 392-532 (HLDYFSVQSG…SKQQNSQETV (141 aa)). The tract at residues 513 to 532 (QQHNNQQQNDSKQQNSQETV) is disordered.

Belongs to the alpha-IPM synthase/homocitrate synthase family. LeuA type 1 subfamily. As to quaternary structure, homodimer. The cofactor is Mn(2+).

The protein localises to the cytoplasm. The catalysed reaction is 3-methyl-2-oxobutanoate + acetyl-CoA + H2O = (2S)-2-isopropylmalate + CoA + H(+). It functions in the pathway amino-acid biosynthesis; L-leucine biosynthesis; L-leucine from 3-methyl-2-oxobutanoate: step 1/4. Catalyzes the condensation of the acetyl group of acetyl-CoA with 3-methyl-2-oxobutanoate (2-ketoisovalerate) to form 3-carboxy-3-hydroxy-4-methylpentanoate (2-isopropylmalate). In Pectobacterium atrosepticum (strain SCRI 1043 / ATCC BAA-672) (Erwinia carotovora subsp. atroseptica), this protein is 2-isopropylmalate synthase.